A 473-amino-acid chain; its full sequence is Ribulose bisphosphate carboxylase large chain (473 aa).

2 residues coordinate substrate: Asn116 and Thr166. Residue Lys168 is the Proton acceptor of the active site. Lys170 is a binding site for substrate. Mg(2+) is bound by residues Lys194, Asp196, and Glu197. Position 194 is an N6-carboxylysine (Lys194). Catalysis depends on His287, which acts as the Proton acceptor. 3 residues coordinate substrate: Arg288, His320, and Ser372.

Belongs to the RuBisCO large chain family. Type I subfamily. Heterohexadecamer of 8 large chains and 8 small chains. Mg(2+) serves as cofactor.

It catalyses the reaction 2 (2R)-3-phosphoglycerate + 2 H(+) = D-ribulose 1,5-bisphosphate + CO2 + H2O. The enzyme catalyses D-ribulose 1,5-bisphosphate + O2 = 2-phosphoglycolate + (2R)-3-phosphoglycerate + 2 H(+). Its function is as follows. RuBisCO catalyzes two reactions: the carboxylation of D-ribulose 1,5-bisphosphate, the primary event in carbon dioxide fixation, as well as the oxidative fragmentation of the pentose substrate. Both reactions occur simultaneously and in competition at the same active site. The polypeptide is Ribulose bisphosphate carboxylase large chain (Nitrobacter winogradskyi (Nitrobacter agilis)).